Reading from the N-terminus, the 161-residue chain is Nucleotide-binding protein PSEEN4469 (161 aa).

This sequence belongs to the YajQ family.

Functionally, nucleotide-binding protein. The polypeptide is Nucleotide-binding protein PSEEN4469 (Pseudomonas entomophila (strain L48)).